We begin with the raw amino-acid sequence, 505 residues long: Holliday junction branch migration ATPase PINA (505 aa).

Positions 2–106 constitute a PINc domain; it reads NDLMLDKSAL…IVTADETQKK (105 aa). Positions 434–505 are KH domain; sequence PVNRGITMSN…NIKIKIKLSD (72 aa). The interval 493–505 is required for maximum interaction with Hjc and Hjm; the sequence is KKNNIKIKIKLSD.

As to quaternary structure, homohexamer; the central pore (25-31 Angstroms) is large enough to hold dsDNA. In PDB:5F4H two of the 6 subunits are in an ATP-binding competent conformation. Interacts with Holliday junction resolvase Hjc; in the presence of HJ DNA this interaction decreases branch migration but not Y-DNA unwinding. Interacts with helicase Hjm (hel308) which decreases the DNA helicase activity of Hjm. Ca(2+) is required as a cofactor.

It catalyses the reaction ATP + H2O = ADP + phosphate + H(+). In terms of biological role, promotes Holliday junction (HJ) branch migration and unwinds Y-shaped DNA (but not replication forks or dsDNA) in an ATP hydrolysis-dependent manner. Stimulates cleavage by HJ resolvase Hjc. Unwinds Y-shaped and 3'-flap DNA substrates. In the absence of other proteins stabilizes replication forks (prevents spontaneous unwinding); Hjc, Hjm (Hel308) and PINA coordinate HJ migration and cleavage of replication forks in a coordinated way. Inhibits the 5'-3' (but not 3'-5') helicase activity of helicase Hjm (Hel308) on overhang DNA. Probably acts as an ATP-dependent pump that pulls DNA through the hexamer. The sequence is that of Holliday junction branch migration ATPase PINA from Saccharolobus islandicus (strain REY15A) (Sulfolobus islandicus).